A 64-amino-acid polypeptide reads, in one-letter code: Conotoxin Pn-B01122 (64 aa).

A signal peptide spans 1 to 22; it reads MRCLPVFVILLLLIASAPSVDA. Positions 23–48 are excised as a propeptide; sequence RPKTKDDIPLVSFQDNAKRALQILSN.

It belongs to the conotoxin T superfamily. In terms of processing, contains 2 disulfide bonds that can be either 'C1-C3, C2-C4' or 'C1-C4, C2-C3', since these disulfide connectivities have been observed for conotoxins with cysteine framework V (for examples, see AC P0DQQ7 and AC P81755). In terms of tissue distribution, expressed by the venom duct.

Its subcellular location is the secreted. The polypeptide is Conotoxin Pn-B01122 (Conus pennaceus (Feathered cone)).